Reading from the N-terminus, the 405-residue chain is Mucosal addressin cell adhesion molecule 1 (405 aa).

The signal sequence occupies residues 1 to 21; sequence MESILALLLALALVPYQLSRG. Ig-like domains are found at residues 22 to 109 and 110 to 227; these read QSFQ…ILVY and AFPD…TSPK. The Extracellular portion of the chain corresponds to 22–364; sequence QSFQVNPPES…PGQVTPNSSS (343 aa). 3 cysteine pairs are disulfide-bonded: C45–C91, C49–C95, and C132–C200. Residues 221–257 form a mucin-like region; sequence QSQTSPKPPNTTSAEPYILTSSSTAEAVSTGLNITTL. 2 N-linked (GlcNAc...) asparagine glycosylation sites follow: N230 and N253. The segment at 255 to 275 is disordered; it reads TTLPSAPPYPKLSPRTLSSEG. Residues 258–357 enclose the Ig-like 3 domain; that stretch reads PSAPPYPKLS…EVTNLYVPGQ (100 aa). C293 and C341 form a disulfide bridge. The N-linked (GlcNAc...) asparagine glycan is linked to N361. Residues 365 to 385 traverse the membrane as a helical segment; that stretch reads TVVLWIGSLVLGLLALVFLAY. Topologically, residues 386-405 are cytoplasmic; sequence RLWKCYRPGPRPDTSSCTHL.

Homodimer. Post-translationally, O-glycosylated; contains syalic acid. The Ser/Thr-rich mucin-like domain may provide possible sites for O-glycosylation. In terms of tissue distribution, highly expressed on high endothelial venules (HEV) of organized intestinal lymphoid tissues like the Peyer patches and mesenteric lymph nodes, and in the lamina propria of the intestine. Some expression found in the spleen, and low levels of expression in the peripheral lymph nodes and the lactating mammary gland. No expression was detected in the liver, kidneys, lungs or in normal brain. Expressed as well in brain endothelioma cells, and mucosal tissues which are in a chronic state of inflammation, such as inflamed pancreas.

It is found in the membrane. Its function is as follows. Cell adhesion leukocyte receptor expressed by mucosal venules, helps to direct lymphocyte traffic into mucosal tissues including the Peyer patches and the intestinal lamina propria. It can bind both the integrin alpha-4/beta-7 and L-selectin, regulating both the passage and retention of leukocytes. Both isoform 1 and isoform 2 can adhere to integrin alpha-4/beta-7. Isoform 2, lacking the mucin-like domain, may be specialized in supporting integrin alpha-4/beta-7-dependent adhesion strengthening, independent of L-selectin binding. This chain is Mucosal addressin cell adhesion molecule 1 (Madcam1), found in Mus musculus (Mouse).